A 195-amino-acid chain; its full sequence is ATP-dependent Clp protease proteolytic subunit (195 aa).

Catalysis depends on Ser-98, which acts as the Nucleophile. His-123 is a catalytic residue.

This sequence belongs to the peptidase S14 family. Fourteen ClpP subunits assemble into 2 heptameric rings which stack back to back to give a disk-like structure with a central cavity, resembling the structure of eukaryotic proteasomes.

It is found in the cytoplasm. It catalyses the reaction Hydrolysis of proteins to small peptides in the presence of ATP and magnesium. alpha-casein is the usual test substrate. In the absence of ATP, only oligopeptides shorter than five residues are hydrolyzed (such as succinyl-Leu-Tyr-|-NHMec, and Leu-Tyr-Leu-|-Tyr-Trp, in which cleavage of the -Tyr-|-Leu- and -Tyr-|-Trp bonds also occurs).. Cleaves peptides in various proteins in a process that requires ATP hydrolysis. Has a chymotrypsin-like activity. Plays a major role in the degradation of misfolded proteins. The protein is ATP-dependent Clp protease proteolytic subunit of Helicobacter pylori (strain J99 / ATCC 700824) (Campylobacter pylori J99).